We begin with the raw amino-acid sequence, 630 residues long: Polyphenol oxidase A, chloroplastic (630 aa).

The segment at 1–25 (MASLCSNSSSTSLKTPFTSSTTCLS) is disordered. A chloroplast-targeting transit peptide spans 1-87 (MASLCSNSSS…ANAIPLAASA (87 aa)). Cystine bridges form between C98-C114 and C113-C181. Positions 180, 198, 207, 328, 332, and 370 each coordinate Cu cation. The segment at residues 184 to 198 (CNGGYSIDGKVLQVH) is a cross-link (2'-(S-cysteinyl)-histidine (Cys-His)).

The protein belongs to the tyrosinase family. Cu(2+) is required as a cofactor.

Its subcellular location is the plastid. It localises to the chloroplast thylakoid lumen. It catalyses the reaction 2 catechol + O2 = 2 1,2-benzoquinone + 2 H2O. Catalyzes the oxidation of mono- and o-diphenols to o-diquinones. This is Polyphenol oxidase A, chloroplastic from Solanum lycopersicum (Tomato).